The primary structure comprises 317 residues: Acetyl-coenzyme A carboxylase carboxyl transferase subunit alpha (317 aa).

In terms of domain architecture, CoA carboxyltransferase C-terminal spans 38 to 292; the sequence is TLEERLARLE…DNIIKQSLVE (255 aa).

Belongs to the AccA family. In terms of assembly, acetyl-CoA carboxylase is a heterohexamer composed of biotin carboxyl carrier protein (AccB), biotin carboxylase (AccC) and two subunits each of ACCase subunit alpha (AccA) and ACCase subunit beta (AccD).

It is found in the cytoplasm. The enzyme catalyses N(6)-carboxybiotinyl-L-lysyl-[protein] + acetyl-CoA = N(6)-biotinyl-L-lysyl-[protein] + malonyl-CoA. It participates in lipid metabolism; malonyl-CoA biosynthesis; malonyl-CoA from acetyl-CoA: step 1/1. In terms of biological role, component of the acetyl coenzyme A carboxylase (ACC) complex. First, biotin carboxylase catalyzes the carboxylation of biotin on its carrier protein (BCCP) and then the CO(2) group is transferred by the carboxyltransferase to acetyl-CoA to form malonyl-CoA. The protein is Acetyl-coenzyme A carboxylase carboxyl transferase subunit alpha of Oceanobacillus iheyensis (strain DSM 14371 / CIP 107618 / JCM 11309 / KCTC 3954 / HTE831).